The sequence spans 711 residues: MKYAVEVNNNVEIFEINKVAKQAAGACLMKVKNTVVLATVARENTQVEEDFLPLTVQYIEKQYAAGRIPGGYIKRETKPGDFETLTSRIIDRSLRPLFPKGYAYPTQIVVFVLSADPEIDLQVVGLNAASVALYLSDIPMKAPVCGVRVGYINDSFVINPTNSELQNSALDLYVAGVKDEMLMIEMRSLPNMNGENQNMNEFSEDKMVEAIDFASKAILAGSTAYENTFSALKKPDAALEYKPEVEDENIANFIEQNFTSDVQAAINQMAKSERATELDKIVNKIMQSETAIQNEWQKNVVSNIIGKFKRKIIRSQIINERRRADGRALDEIRPISIETNILPNAHGSCLFTRGQTQALVVTTLGGETDAQVSDSLTSNTPISERFMFQYNFPGFCVGEASPLKSPGRRELGHGNLAKRALTPSVPLNNPQVIRTVSEILESNGSSSMASVCGGSLSLRAAGVSTLKLVAGVAMGLIFEDDKHAILTDIMGLEDHDGDMDFKVAGTREGITALQMDIKLGGISLEILREALNQAKDGRNYILNLMEVANDDIIINEEILPKIEIFGVDPNKMVDIIGQGGKTIKELIDKYEVSIDLERDSGEVKIQGANKINVENAKSDILNIVKKSNDFKKGSKFGHHHERKETSNFQVGEEFDGVVKKIMDFGAFISLKDGIDGLLHVSKIKTQLSEGDTLRVKVEEIKRGKISLELCE.

2 residues coordinate Mg(2+): aspartate 494 and aspartate 500. A KH domain is found at 560-620 (PKIEIFGVDP…INVENAKSDI (61 aa)). Residues 651–710 (GEEFDGVVKKIMDFGAFISLKDGIDGLLHVSKIKTQLSEGDTLRVKVEEIKRGKISLELC) enclose the S1 motif domain.

It belongs to the polyribonucleotide nucleotidyltransferase family. The cofactor is Mg(2+).

It localises to the cytoplasm. The enzyme catalyses RNA(n+1) + phosphate = RNA(n) + a ribonucleoside 5'-diphosphate. Involved in mRNA degradation. Catalyzes the phosphorolysis of single-stranded polyribonucleotides processively in the 3'- to 5'-direction. The polypeptide is Polyribonucleotide nucleotidyltransferase (Campylobacter hominis (strain ATCC BAA-381 / DSM 21671 / CCUG 45161 / LMG 19568 / NCTC 13146 / CH001A)).